We begin with the raw amino-acid sequence, 432 residues long: Ornithine aminotransferase, mitochondrial (432 aa).

Lysine 287 carries the N6-(pyridoxal phosphate)lysine modification.

Belongs to the class-III pyridoxal-phosphate-dependent aminotransferase family. Homotetramer. The cofactor is pyridoxal 5'-phosphate.

The protein localises to the mitochondrion matrix. It catalyses the reaction a 2-oxocarboxylate + L-ornithine = L-glutamate 5-semialdehyde + an L-alpha-amino acid. The protein operates within amino-acid biosynthesis; L-proline biosynthesis; L-glutamate 5-semialdehyde from L-ornithine: step 1/1. The sequence is that of Ornithine aminotransferase, mitochondrial (Oat) from Drosophila ananassae (Fruit fly).